The primary structure comprises 72 residues: uncharacterized protein (72 aa).

This sequence belongs to the ycf76 family.

The protein resides in the plastid. Its subcellular location is the chloroplast. This is an uncharacterized protein from Oryza nivara (Indian wild rice).